The primary structure comprises 612 residues: MSKNKKMSLSGGDTTEKFIYKPKDLIWAKMKGFTPWPGMIVEPPLDLLTQQRRANTKCVFFFGSRNFAWIEENNIKPFEGPWKEELAKVSKPAAFRHAMADIDKYIDDPAEVDDQINESCGVPNHATEADFDKIRDAVDSDENAVDADADANNGVVVHVVGSPDVSEAVEGENNADSSASPTVTAATPATAKSPAKRTPKAKPVSAVSATKAAKASTTKSAQKRRISAHQTPTGANTSGLPNAKRGKRVVSGGATPGNFDGASSSSPTARRRVEVDDLLASLAAKRAPNAIALLDRPVVTRPETQAIDMNSRSNTLADRDIVPSELTFGFLGLGMMGSTIVKDLIYTGHKVVVWNRTIDKCQPFVEAGAEVKDTPMDVVEAADIIFCCVSDPKGAKDLVFGNCGVLQLKDLRNKAYVEMSTVDPDTSLDIGEGIKQCNGRYLEAQIHGSRQEAADGMLIILAGGDRTVFEECHSCFKTIAKNTFFLGNVGNACKVNLILQTIQAVSLVGLAEALALADRFSISLNDIIDIFDLTSMKSPLLLAKGKEMAKGDFNPQQPLSHMQRDLRLVLNMAENLDQSMPVTSITNEVFKHTKRLGYSEHDSSAVFVRSRF.

Positions 22-81 (PKDLIWAKMKGFTPWPGMIVEPPLDLLTQQRRANTKCVFFFGSRNFAWIEENNIKPFEGP) constitute a PWWP domain. The segment at 168–270 (AVEGENNADS…GASSSSPTAR (103 aa)) is disordered. 2 stretches are compositionally biased toward low complexity: residues 177–193 (SSASPTVTAATPATAKS) and 201–220 (AKPVSAVSATKAAKASTTKS). Residues 228–240 (AHQTPTGANTSGL) are compositionally biased toward polar residues. Positions 276-279 (DDLL) are interaction with histone H3. The interval 319-612 (RDIVPSELTF…SSAVFVRSRF (294 aa)) is dehydrogenase domain. Residues 329-343 (GFLGLGMMGSTIVKD), threonine 421, and arginine 564 contribute to the NAD(+) site.

This sequence belongs to the HIBADH-related family. NP60 subfamily. Binds to mononucleosomes. Interacts with male-specific lethal (MSL) histone acetyltransferase complex at least composed of mof, msl-1, msl-2 and msl-3.

The protein localises to the chromosome. Nucleosome-destabilizing factor that is recruited to genes during transcriptional activation and colocalizes with a subset of trimethylated 'Lys-36' histone H3 (H3K36me3)-enriched regions. Binds DNA (in vitro). Facilitates Pol II transcription through nucleosomes. Facilitates male-specific lethal (MSL) histone acetyltransferase complex targeting to active genes on the X chromosome. Stimulates the acetylation of 'Lys-56' of nucleosomal histone H3 (H3K56ac) by nej. This Drosophila pseudoobscura pseudoobscura (Fruit fly) protein is Cytokine-like nuclear factor N-PAC.